The sequence spans 1168 residues: Probable serine/threonine protein kinase IRE (1168 aa).

Disordered regions lie at residues 1–165 (MSTT…GVES) and 377–444 (EKQN…KIQP). The span at 16–25 (PTTISTPTST) shows a compositional bias: low complexity. Basic and acidic residues-rich tracts occupy residues 39–54 (RHSDKEGEDEQAKTDE) and 107–130 (QDDKDVAKEKPRVGVVDARADARA). Polar residues-rich tracts occupy residues 146–163 (QWSQSKSQRVPANSNPGV) and 401–414 (TARSTDSTSSNFRM). A C2H2-type; atypical zinc finger spans residues 488–507 (CRICEVEIPVVHVEEHSRIC). 3 disordered regions span residues 546–566 (PRAVADSARLSNSSRQEDLDE), 602–622 (GTKDSSAGSLTPPSPATPRNS), and 717–744 (SSNAMPDEESSADEDTVRSLRASPLNPR). The 290-residue stretch at 754-1043 (FEIIKPISRG…AGEVKQHHFF (290 aa)) folds into the Protein kinase domain. Residues 760–768 (ISRGAFGRV) and Lys-783 each bind ATP. Catalysis depends on Asp-877, which acts as the Proton acceptor. One can recognise an AGC-kinase C-terminal domain in the interval 1044–1144 (KDINWDTLAR…KNLSQLASIN (101 aa)).

Belongs to the protein kinase superfamily. AGC Ser/Thr protein kinase family. As to expression, highly expressed in roots, elongating root hair cells and pollen grains.

It catalyses the reaction L-seryl-[protein] + ATP = O-phospho-L-seryl-[protein] + ADP + H(+). The enzyme catalyses L-threonyl-[protein] + ATP = O-phospho-L-threonyl-[protein] + ADP + H(+). Its function is as follows. Modulates root tip growth. May play a common role in the tip growth of plant cells. This is Probable serine/threonine protein kinase IRE from Arabidopsis thaliana (Mouse-ear cress).